The primary structure comprises 155 residues: Transcriptional repressor NrdR (155 aa).

The segment at 3–34 (CPFCGNVDTQVKDSRPAEDHVAIRRRRFCPAC) is a zinc-finger region. The region spanning 49–139 (LVVIKSSGKR…VYKNFQAADD (91 aa)) is the ATP-cone domain.

The protein belongs to the NrdR family. It depends on Zn(2+) as a cofactor.

Its function is as follows. Negatively regulates transcription of bacterial ribonucleotide reductase nrd genes and operons by binding to NrdR-boxes. The protein is Transcriptional repressor NrdR of Dinoroseobacter shibae (strain DSM 16493 / NCIMB 14021 / DFL 12).